Here is a 246-residue protein sequence, read N- to C-terminus: MyoD family inhibitor domain-containing protein (246 aa).

The tract at residues Met-1–Ile-71 is disordered. Basic and acidic residues predominate over residues Lys-33–Ile-43. Residues Thr-44–Gly-63 are compositionally biased toward polar residues. An MDFI domain is found at Gln-74–Ser-246. A phosphoserine mark is found at Ser-128, Ser-140, and Ser-143.

It belongs to the MDFI family. Interacts with HAND1; the interaction sequesters HAND1 into the nucleolus and inhibits its activity. Interacts (via C-terminus) with ZIC2. Interacts (via C-terminus) with AXIN1, the histidine-rich region of CCNT1/cyclin-T and weakly with LEF1. Interacts with CCNT2. Interacts with GATA2. Interacts (via C-terminus) with Piezo channel composed of PIEZO1 or PIEZO2; the interaction prolongs Piezo channel inactivation. As to quaternary structure, (Microbial infection) Interacts (via C-terminus) with HIV-1 Tat and Rev. In terms of processing, palmitoylated. As to expression, expressed in lymphatic tissues. Detected in the spleen, thymus, peripheral blood leukocytes as well as prostate, uterus and small intestine. Expressed in lymphatic endothelial cells.

The protein resides in the nucleus. It localises to the nucleolus. It is found in the cytoplasm. The protein localises to the secreted. Its function is as follows. Required to control the activity of various transcription factors through their sequestration in the cytoplasm. Retains nuclear Zic proteins ZIC1, ZIC2 and ZIC3 in the cytoplasm and inhibits their transcriptional activation. Modulates the expression from cellular promoters. Binds to the axin complex, resulting in an increase in the level of free beta-catenin. Affects axin regulation of the WNT and JNK signaling pathways. Involved in the development of lymphatic vessel valves. Required to promote lymphatic endothelial cell migration, in a process that involves down-regulation of integrin beta 1 activation and control of cell adhesion to the extracellular matrix. Regulates the activity of mechanosensitive Piezo channel. In terms of biological role, (Microbial infection) Modulates the expression from viral promoters. Down-regulates Tat-dependent transcription of the human immunodeficiency virus type 1 (HIV-1) LTR by interacting with HIV-1 Tat and Rev and impairing their nuclear import, probably by rendering the NLS domains inaccessible to importin-beta. Also stimulates activation of human T-cell leukemia virus type I (HTLV-I) LTR. The protein is MyoD family inhibitor domain-containing protein of Homo sapiens (Human).